The primary structure comprises 480 residues: Bifunctional protein HldE (480 aa).

The tract at residues 1 to 316 (MNMHDFSKTK…EQLNASMRHQ (316 aa)) is ribokinase. ATP is bound at residue 192-195 (NQGE). The active site involves D261. The cytidylyltransferase stretch occupies residues 342-480 (FTNGCFDLLH…EAEIKEGAAQ (139 aa)).

The protein in the N-terminal section; belongs to the carbohydrate kinase PfkB family. It in the C-terminal section; belongs to the cytidylyltransferase family. Homodimer.

It catalyses the reaction D-glycero-beta-D-manno-heptose 7-phosphate + ATP = D-glycero-beta-D-manno-heptose 1,7-bisphosphate + ADP + H(+). The catalysed reaction is D-glycero-beta-D-manno-heptose 1-phosphate + ATP + H(+) = ADP-D-glycero-beta-D-manno-heptose + diphosphate. The protein operates within nucleotide-sugar biosynthesis; ADP-L-glycero-beta-D-manno-heptose biosynthesis; ADP-L-glycero-beta-D-manno-heptose from D-glycero-beta-D-manno-heptose 7-phosphate: step 1/4. Its pathway is nucleotide-sugar biosynthesis; ADP-L-glycero-beta-D-manno-heptose biosynthesis; ADP-L-glycero-beta-D-manno-heptose from D-glycero-beta-D-manno-heptose 7-phosphate: step 3/4. Catalyzes the phosphorylation of D-glycero-D-manno-heptose 7-phosphate at the C-1 position to selectively form D-glycero-beta-D-manno-heptose-1,7-bisphosphate. Functionally, catalyzes the ADP transfer from ATP to D-glycero-beta-D-manno-heptose 1-phosphate, yielding ADP-D-glycero-beta-D-manno-heptose. The protein is Bifunctional protein HldE of Hydrogenovibrio crunogenus (strain DSM 25203 / XCL-2) (Thiomicrospira crunogena).